We begin with the raw amino-acid sequence, 309 residues long: Formamidopyrimidine-DNA glycosylase (309 aa).

Pro2 serves as the catalytic Schiff-base intermediate with DNA. The active-site Proton donor is Glu3. Residue Lys56 is the Proton donor; for beta-elimination activity of the active site. Positions 106 and 129 each coordinate DNA. The FPG-type zinc-finger motif lies at 271–305; it reads NVYGRQGNACPHCESTLENIKLNGRASVYCPLCQP. Arg295 serves as the catalytic Proton donor; for delta-elimination activity.

It belongs to the FPG family. As to quaternary structure, monomer. Zn(2+) is required as a cofactor.

It carries out the reaction Hydrolysis of DNA containing ring-opened 7-methylguanine residues, releasing 2,6-diamino-4-hydroxy-5-(N-methyl)formamidopyrimidine.. It catalyses the reaction 2'-deoxyribonucleotide-(2'-deoxyribose 5'-phosphate)-2'-deoxyribonucleotide-DNA = a 3'-end 2'-deoxyribonucleotide-(2,3-dehydro-2,3-deoxyribose 5'-phosphate)-DNA + a 5'-end 5'-phospho-2'-deoxyribonucleoside-DNA + H(+). In terms of biological role, involved in base excision repair of DNA damaged by oxidation or by mutagenic agents. Acts as a DNA glycosylase that recognizes and removes damaged bases. Has a preference for oxidized purines, such as 7,8-dihydro-8-oxoguanine (8-oxoG). Has AP (apurinic/apyrimidinic) lyase activity and introduces nicks in the DNA strand. Cleaves the DNA backbone by beta-delta elimination to generate a single-strand break at the site of the removed base with both 3'- and 5'-phosphates. The protein is Formamidopyrimidine-DNA glycosylase of Psychrobacter arcticus (strain DSM 17307 / VKM B-2377 / 273-4).